The primary structure comprises 342 residues: Glucan endo-1,3-beta-glucosidase (342 aa).

Positions 1–26 (MLASSPMLLFLLSLLMAYNFDTTAGQ) are cleaved as a signal peptide. Catalysis depends on Glu119, which acts as the Proton donor. The active-site Nucleophile is the Glu261.

The protein belongs to the glycosyl hydrolase 17 family. In terms of processing, the N-terminus is blocked.

The protein resides in the vacuole. The enzyme catalyses Hydrolysis of (1-&gt;3)-beta-D-glucosidic linkages in (1-&gt;3)-beta-D-glucans.. In terms of biological role, is thought to be an important plant defense-related product against fungal pathogens. Accumulation of the glucanase can be detected as early as 4 hours after inoculation. This is Glucan endo-1,3-beta-glucosidase (BGL) from Brassica campestris (Field mustard).